A 55-amino-acid chain; its full sequence is MEMKKLIERINFLYKKSKEDGLTEEEKKEQDTLRREYIEIIKGNVKVQLSKVKKI.

The protein belongs to the UPF0291 family.

The protein localises to the cytoplasm. In Clostridium acetobutylicum (strain ATCC 824 / DSM 792 / JCM 1419 / IAM 19013 / LMG 5710 / NBRC 13948 / NRRL B-527 / VKM B-1787 / 2291 / W), this protein is UPF0291 protein CA_C2726.